The following is a 471-amino-acid chain: Neuraminidase (471 aa).

The Intravirion portion of the chain corresponds to 1–6 (MNPNQK). A helical transmembrane segment spans residues 7-27 (IICISATGMTLSVVSLLIGIA). Residues 11–33 (SATGMTLSVVSLLIGIANLGLNI) form an involved in apical transport and lipid raft association region. Residues 28–471 (NLGLNIGLHY…HDGAEIIYFK (444 aa)) are Virion surface-facing. The hypervariable stalk region stretch occupies residues 36–89 (HYKVGDTPDVNTPNVNGTNSTTTTIINNNTQNNFTNITNIIHNKNEERTFLNLT). 6 N-linked (GlcNAc...) asparagine; by host glycosylation sites follow: Asn-51, Asn-54, Asn-63, Asn-68, Asn-71, and Asn-87. The head of neuraminidase stretch occupies residues 92–471 (LCEVNSWHIL…HDGAEIIYFK (380 aa)). 8 disulfides stabilise this stretch: Cys-93–Cys-420, Cys-125–Cys-130, Cys-185–Cys-232, Cys-234–Cys-239, Cys-280–Cys-293, Cys-282–Cys-291, Cys-320–Cys-338, and Cys-424–Cys-450. Arg-119 is a binding site for substrate. Residue Asn-147 is glycosylated (N-linked (GlcNAc...) asparagine; by host). Residue Asp-152 is the Proton donor/acceptor of the active site. Arg-153 serves as a coordination point for substrate. Asn-202 carries an N-linked (GlcNAc...) asparagine; by host glycan. A substrate-binding site is contributed by 278–279 (EE). Residue Arg-294 participates in substrate binding. Ca(2+) is bound by residues Asp-295, Gly-299, and Asp-326. Arg-373 is a binding site for substrate. N-linked (GlcNAc...) asparagine; by host glycosylation occurs at Asn-403. Residue Tyr-407 is the Nucleophile of the active site.

The protein belongs to the glycosyl hydrolase 34 family. In terms of assembly, homotetramer. Ca(2+) serves as cofactor. Post-translationally, N-glycosylated.

The protein resides in the virion membrane. Its subcellular location is the host apical cell membrane. The catalysed reaction is Hydrolysis of alpha-(2-&gt;3)-, alpha-(2-&gt;6)-, alpha-(2-&gt;8)- glycosidic linkages of terminal sialic acid residues in oligosaccharides, glycoproteins, glycolipids, colominic acid and synthetic substrates.. Inhibited by the neuraminidase inhibitors zanamivir (Relenza) and oseltamivir (Tamiflu). These drugs interfere with the release of progeny virus from infected cells and are effective against all influenza strains. Resistance to neuraminidase inhibitors is quite rare. Functionally, catalyzes the removal of terminal sialic acid residues from viral and cellular glycoconjugates. Cleaves off the terminal sialic acids on the glycosylated HA during virus budding to facilitate virus release. Additionally helps virus spread through the circulation by further removing sialic acids from the cell surface. These cleavages prevent self-aggregation and ensure the efficient spread of the progeny virus from cell to cell. Otherwise, infection would be limited to one round of replication. Described as a receptor-destroying enzyme because it cleaves a terminal sialic acid from the cellular receptors. May facilitate viral invasion of the upper airways by cleaving the sialic acid moieties on the mucin of the airway epithelial cells. Likely to plays a role in the budding process through its association with lipid rafts during intracellular transport. May additionally display a raft-association independent effect on budding. Plays a role in the determination of host range restriction on replication and virulence. Sialidase activity in late endosome/lysosome traffic seems to enhance virus replication. In Influenza A virus (strain A/Gull/Maryland/704/1977 H13N6), this protein is Neuraminidase.